The sequence spans 397 residues: Elongation factor Tu (397 aa).

In terms of domain architecture, tr-type G spans 10 to 206; that stretch reads KPHVNIGTIG…AVDEYIPTPE (197 aa). The G1 stretch occupies residues 19 to 26; that stretch reads GHVDHGKT. 19 to 26 serves as a coordination point for GTP; sequence GHVDHGKT. T26 provides a ligand contact to Mg(2+). The segment at 60–64 is G2; sequence GITIS. A G3 region spans residues 81–84; sequence DCPG. GTP contacts are provided by residues 81–85 and 136–139; these read DCPGH and NKAD. A G4 region spans residues 136-139; the sequence is NKAD. Residues 174 to 176 are G5; sequence SAL.

It belongs to the TRAFAC class translation factor GTPase superfamily. Classic translation factor GTPase family. EF-Tu/EF-1A subfamily. In terms of assembly, monomer.

The protein localises to the cytoplasm. It carries out the reaction GTP + H2O = GDP + phosphate + H(+). Functionally, GTP hydrolase that promotes the GTP-dependent binding of aminoacyl-tRNA to the A-site of ribosomes during protein biosynthesis. The sequence is that of Elongation factor Tu from Clostridium tetani (strain Massachusetts / E88).